A 434-amino-acid chain; its full sequence is Zinc finger CCCH domain-containing protein 10 (434 aa).

A disordered region spans residues 1–37; sequence MPDRDSYANGTGSSGGGPGGGGSEEASGAGVGSGGAS. Gly residues predominate over residues 12–35; sequence GSSGGGPGGGGSEEASGAGVGSGG. 3 consecutive C3H1-type zinc fingers follow at residues 36 to 63, 73 to 99, and 134 to 161; these read ASSD…HPDM, KNEF…HGSK, and KEEV…HLQR. Omega-N-methylarginine occurs at positions 185 and 186. The span at 196 to 207 shows a compositional bias: basic and acidic residues; it reads PDRGFEDHEPGP. A disordered region spans residues 196–217; sequence PDRGFEDHEPGPKRRRGGCCPP. Residues 234 to 280 adopt a coiled-coil conformation; that stretch reads GVECRLLEEENAMLRKRVEELKKQVSNLLATNEVLLEQNAQFRNQAK. Positions 314-330 are enriched in polar residues; the sequence is TTLSSQALQPRPVSQQE. The tract at residues 314–362 is disordered; it reads TTLSSQALQPRPVSQQELVAPAGAPAAPPTNAAPPAAPPPPPPHLTPEI. The span at 339–358 shows a compositional bias: pro residues; it reads AAPPTNAAPPAAPPPPPPHL.

It is found in the nucleus. In terms of biological role, specific regulator of miRNA biogenesis. Binds, via the C3H1-type zinc finger domains, to the binding motif 5'-GCAGCGC-3' on microRNA pri-MIR143 and negatively regulates the processing to mature microRNA. This is Zinc finger CCCH domain-containing protein 10 (ZC3H10) from Homo sapiens (Human).